We begin with the raw amino-acid sequence, 154 residues long: SsrA-binding protein (154 aa).

This sequence belongs to the SmpB family.

Its subcellular location is the cytoplasm. Required for rescue of stalled ribosomes mediated by trans-translation. Binds to transfer-messenger RNA (tmRNA), required for stable association of tmRNA with ribosomes. tmRNA and SmpB together mimic tRNA shape, replacing the anticodon stem-loop with SmpB. tmRNA is encoded by the ssrA gene; the 2 termini fold to resemble tRNA(Ala) and it encodes a 'tag peptide', a short internal open reading frame. During trans-translation Ala-aminoacylated tmRNA acts like a tRNA, entering the A-site of stalled ribosomes, displacing the stalled mRNA. The ribosome then switches to translate the ORF on the tmRNA; the nascent peptide is terminated with the 'tag peptide' encoded by the tmRNA and targeted for degradation. The ribosome is freed to recommence translation, which seems to be the essential function of trans-translation. This is SsrA-binding protein from Treponema pallidum (strain Nichols).